The chain runs to 338 residues: uncharacterized protein (338 aa).

The protein belongs to the MG032/MG096/MG288 family.

This is an uncharacterized protein from Mycoplasma pneumoniae (strain ATCC 29342 / M129 / Subtype 1) (Mycoplasmoides pneumoniae).